A 484-amino-acid polypeptide reads, in one-letter code: Probable cytosol aminopeptidase (484 aa).

Mn(2+)-binding residues include lysine 256 and aspartate 261. Residue lysine 268 is part of the active site. Residues aspartate 279, aspartate 338, and glutamate 340 each contribute to the Mn(2+) site. The active site involves arginine 342.

This sequence belongs to the peptidase M17 family. Mn(2+) is required as a cofactor.

It is found in the cytoplasm. It catalyses the reaction Release of an N-terminal amino acid, Xaa-|-Yaa-, in which Xaa is preferably Leu, but may be other amino acids including Pro although not Arg or Lys, and Yaa may be Pro. Amino acid amides and methyl esters are also readily hydrolyzed, but rates on arylamides are exceedingly low.. It carries out the reaction Release of an N-terminal amino acid, preferentially leucine, but not glutamic or aspartic acids.. In terms of biological role, presumably involved in the processing and regular turnover of intracellular proteins. Catalyzes the removal of unsubstituted N-terminal amino acids from various peptides. This Methylibium petroleiphilum (strain ATCC BAA-1232 / LMG 22953 / PM1) protein is Probable cytosol aminopeptidase.